The following is a 240-amino-acid chain: Ribonuclease PH (240 aa).

Phosphate is bound by residues R87 and G125–R127.

The protein belongs to the RNase PH family. In terms of assembly, homohexameric ring arranged as a trimer of dimers.

It catalyses the reaction tRNA(n+1) + phosphate = tRNA(n) + a ribonucleoside 5'-diphosphate. Its function is as follows. Phosphorolytic 3'-5' exoribonuclease that plays an important role in tRNA 3'-end maturation. Removes nucleotide residues following the 3'-CCA terminus of tRNAs; can also add nucleotides to the ends of RNA molecules by using nucleoside diphosphates as substrates, but this may not be physiologically important. Probably plays a role in initiation of 16S rRNA degradation (leading to ribosome degradation) during starvation. This is Ribonuclease PH from Pseudomonas fluorescens (strain ATCC BAA-477 / NRRL B-23932 / Pf-5).